Consider the following 292-residue polypeptide: Probable ABC transporter permease protein PH1215 (292 aa).

6 consecutive transmembrane segments (helical) span residues 10 to 30, 72 to 92, 106 to 126, 160 to 180, 215 to 235, and 261 to 281; these read IILFLIPALILIGIFVYFAVV, LLLILLFVPGSLLLGLFLAIL, IYVLPFALSFVVTATLWAWMY, IIIALIWQFSGYTMIIYLAGI, LSAFVVLMVFSLKAFDFIWVL, and FAYGAAIATILLLMALVVVLP. In terms of domain architecture, ABC transmembrane type-1 spans 68–284; that stretch reads LRNNLLLILL…ALVVVLPYLY (217 aa).

Belongs to the binding-protein-dependent transport system permease family. MalFG subfamily.

The protein resides in the cell membrane. Functionally, probably part of a binding-protein-dependent transport system PH1214/15/16. Probably responsible for the translocation of the substrate across the membrane. The chain is Probable ABC transporter permease protein PH1215 from Pyrococcus horikoshii (strain ATCC 700860 / DSM 12428 / JCM 9974 / NBRC 100139 / OT-3).